The sequence spans 482 residues: Probable cytochrome P450 508D1 (482 aa).

The helical transmembrane segment at Met-1–Lys-21 threads the bilayer. Cys-428 provides a ligand contact to heme.

Belongs to the cytochrome P450 family. Requires heme as cofactor.

Its subcellular location is the membrane. In Dictyostelium discoideum (Social amoeba), this protein is Probable cytochrome P450 508D1 (cyp508D1).